The following is a 496-amino-acid chain: Glycogen synthase (496 aa).

K15 lines the ADP-alpha-D-glucose pocket.

The protein belongs to the glycosyltransferase 1 family. Bacterial/plant glycogen synthase subfamily.

It catalyses the reaction [(1-&gt;4)-alpha-D-glucosyl](n) + ADP-alpha-D-glucose = [(1-&gt;4)-alpha-D-glucosyl](n+1) + ADP + H(+). It functions in the pathway glycan biosynthesis; glycogen biosynthesis. In terms of biological role, synthesizes alpha-1,4-glucan chains using ADP-glucose. This chain is Glycogen synthase, found in Natranaerobius thermophilus (strain ATCC BAA-1301 / DSM 18059 / JW/NM-WN-LF).